Here is a 158-residue protein sequence, read N- to C-terminus: Transcription antitermination protein NusB (158 aa).

It belongs to the NusB family.

Functionally, involved in transcription antitermination. Required for transcription of ribosomal RNA (rRNA) genes. Binds specifically to the boxA antiterminator sequence of the ribosomal RNA (rrn) operons. The chain is Transcription antitermination protein NusB from Bartonella henselae (strain ATCC 49882 / DSM 28221 / CCUG 30454 / Houston 1) (Rochalimaea henselae).